The following is a 314-amino-acid chain: NF-kappa-B inhibitor alpha (314 aa).

A disordered region spans residues 1–41 (MFQPAEPGQEWAMEGPRDALKKERLLDDRHDSGLDSMKDEE). Over residues 15-41 (GPRDALKKERLLDDRHDSGLDSMKDEE) the composition is skewed to basic and acidic residues. Residue lysine 21 forms a Glycyl lysine isopeptide (Lys-Gly) (interchain with G-Cter in SUMO); alternate linkage. Lysine 21 participates in a covalent cross-link: Glycyl lysine isopeptide (Lys-Gly) (interchain with G-Cter in ubiquitin); alternate. Lysine 22 participates in a covalent cross-link: Glycyl lysine isopeptide (Lys-Gly) (interchain with G-Cter in ubiquitin). Positions 30 to 36 (HDSGLDS) match the Destruction motif motif. The residue at position 32 (serine 32) is a Phosphoserine; by IKKA and IKKB. At serine 36 the chain carries Phosphoserine; by IKKA, IKKB, IKKE and TBK1. Residue tyrosine 42 is modified to Phosphotyrosine; by Tyr-kinases. Positions 45 to 54 (MVKELREIRL) match the Nuclear export signal motif. Positions 110 to 120 (LQQTPLHLAVI) match the Nuclear import signal motif. 4 ANK repeats span residues 110–139 (LQQT…DPEL), 143–172 (RGNT…TQHL), 182–211 (NGHT…DVNA), and 216–245 (NGRT…DVNR). Asparagine 210 and asparagine 244 each carry (3S)-3-hydroxyasparagine; by HIF1AN. A phosphoserine; by CK2 mark is found at serine 283 and serine 288. Position 291 is a phosphothreonine; by CK2 (threonine 291). At serine 293 the chain carries Phosphoserine; by CK2. Threonine 296 is modified (phosphothreonine).

The protein belongs to the NF-kappa-B inhibitor family. In terms of assembly, interacts with RELA; the interaction requires the nuclear import signal. Part of a 70-90 kDa complex at least consisting of CHUK, IKBKB, NFKBIA, RELA, ELP1 and MAP3K14. Interacts with NKIRAS1 and NKIRAS2. Interacts with RWDD3; the interaction enhances sumoylation. Interacts with PRMT2. Interacts with PRKACA in platelets; this interaction is disrupted by thrombin and collagen. Interacts with MEFV. Interacts with DDRGK1; positively regulates NFKBIA phosphorylation and degradation. Interacts with HNRNPA2B1; the interaction may be mediated by the RRM2 domain of HNRNPA2B1, and HNRNPA2B1 may interact simultaneously with FAM76B and either NFKBIA or NFKBIE to form a complex. In terms of processing, phosphorylated at Ser-32 and Ser-36 by IKKA/CHUK and IKKB/IKBKB; disables inhibition of NF-kappa-B DNA-binding activity. Phosphorylation at positions 32 and 36 is prerequisite to recognition by the SCF(FBXW11) and SCF(BTRC) complexes, leading to polyubiquitination and subsequent degradation. Post-translationally, polyubiquitinated at Lys-21 and/or Lys-22 following phosphorylation at Ser-32 and Ser-36. Monoubiquitinated at Lys-21 and/or Lys-22 by UBE2D3. Ubiquitin chain elongation is then performed by CDC34 in cooperation with the SCF(FBXW11) E3 ligase complex, building ubiquitin chains from the UBE2D3-primed NFKBIA-linked ubiquitin. The resulting polyubiquitination leads to protein degradation. Also ubiquitinated by the SCF(BTRC) complex following stimulus-dependent phosphorylation at Ser-32 and Ser-36. Deubiquitinated by USP38, leading to NF-kappa-B inhibition. Sumoylated; sumoylation requires the presence of the nuclear import signal. Sumoylation blocks ubiquitination and proteasome-mediated degradation of the protein thereby increasing the protein stability. In terms of processing, hydroxylated by HIF1AN.

It localises to the cytoplasm. It is found in the nucleus. Functionally, inhibits the activity of dimeric NF-kappa-B/REL complexes by trapping REL (RELA/p65 and NFKB1/p50) dimers in the cytoplasm by masking their nuclear localization signals. On cellular stimulation by immune and pro-inflammatory responses, becomes phosphorylated promoting ubiquitination and degradation, enabling the dimeric RELA to translocate to the nucleus and activate transcription. This chain is NF-kappa-B inhibitor alpha (NFKBIA), found in Sus scrofa (Pig).